The sequence spans 378 residues: Putative gustatory receptor 22f (378 aa).

The Cytoplasmic segment spans residues 1–13; sequence MKMFQPRRGFSCH. Residues 14 to 34 traverse the membrane as a helical segment; that stretch reads LAWFMLQTTLYASWLLGLFPF. The Extracellular portion of the chain corresponds to 35–48; sequence TFDSRRKQLKRSRW. Residues 49–69 form a helical membrane-spanning segment; it reads LLLYGFVLHSLAMCLAMSSHL. Topologically, residues 70–88 are cytoplasmic; the sequence is ASKQRRKYNAFERNPLLEK. Residues 89–109 traverse the membrane as a helical segment; that stretch reads IYMQFQVTTFFTISVLLLMNV. Residues 110–143 lie on the Extracellular side of the membrane; it reads WKSNTVRKIANELLTLEGQVKDLLTLKNCPNFNC. Residues 144-164 traverse the membrane as a helical segment; the sequence is FVIKKHVAAIGQFVISIYFCL. Residues 165–178 lie on the Cytoplasmic side of the membrane; the sequence is CQENSYPKILKILC. Residues 179–199 form a helical membrane-spanning segment; the sequence is CLPSVGLQLIIMHFHTEIILV. Over 200–245 the chain is Extracellular; that stretch reads YRYVWLVNETLEDSHHLSSSRIHALASLYDRLLKLSELVVACNDLQ. The N-linked (GlcNAc...) asparagine glycan is linked to Asn-207. The helical transmembrane segment at 246 to 266 threads the bilayer; that stretch reads LILMLIIYLIGNTVQIFFLIV. Residues 267–354 are Cytoplasmic-facing; that stretch reads LGVSMNKRYI…LCGLFSINHN (88 aa). Residues 355–375 form a helical membrane-spanning segment; that stretch reads MGFQMIITSFLYLVYLLQFDF. Over 376–378 the chain is Extracellular; sequence MNL.

Belongs to the insect chemoreceptor superfamily. Gustatory receptor (GR) family. Gr22e subfamily. As to expression, taste bristles in the foreleg and labial palps.

The protein localises to the cell membrane. In terms of biological role, probable gustatory receptor which mediates acceptance or avoidance behavior, depending on its substrates. This is Putative gustatory receptor 22f (Gr22f) from Drosophila melanogaster (Fruit fly).